The following is a 330-amino-acid chain: Cyclin-dependent kinase 7 (330 aa).

One can recognise a Protein kinase domain in the interval 5–289; sequence YDTIKHLGEG…CTQSLQMEYF (285 aa). Residues 11 to 19 and Lys34 each bind ATP; that span reads LGEGQFANV. Asp130 functions as the Proton acceptor in the catalytic mechanism. Thr163 is modified (phosphothreonine). Residues 305-330 are disordered; it reads KKQQPQKRSRRLDDDGTRPVRRLNFD. A compositionally biased stretch (basic and acidic residues) spans 315-330; sequence RLDDDGTRPVRRLNFD.

Belongs to the protein kinase superfamily. CMGC Ser/Thr protein kinase family. CDC2/CDKX subfamily. Catalytic component which, in association with cyclin H (cyh-1) and mat1, is likely to form the CAK complex.

The catalysed reaction is L-seryl-[protein] + ATP = O-phospho-L-seryl-[protein] + ADP + H(+). It catalyses the reaction L-threonyl-[protein] + ATP = O-phospho-L-threonyl-[protein] + ADP + H(+). It carries out the reaction [DNA-directed RNA polymerase] + ATP = phospho-[DNA-directed RNA polymerase] + ADP + H(+). Its function is as follows. Serine/threonine kinase involved in cell cycle control and in RNA polymerase II-mediated RNA transcription. Required for maintaining chromosome ploidy. May phosphorylate the large subunit of RNA polymerase II, ama-1. The sequence is that of Cyclin-dependent kinase 7 from Caenorhabditis elegans.